We begin with the raw amino-acid sequence, 227 residues long: ATP synthase F(0) complex subunit a (227 aa).

The next 6 membrane-spanning stretches (helical) occupy residues 12–32 (PCLL…LLLP), 69–89 (WALL…LGLL), 98–118 (QLSM…LTGL), 139–159 (IPAL…ALGV), 170–190 (LLIQ…PSIS), and 196–216 (ILFL…YVFV).

This sequence belongs to the ATPase A chain family. As to quaternary structure, component of the ATP synthase complex composed at least of ATP5F1A/subunit alpha, ATP5F1B/subunit beta, ATP5MC1/subunit c (homooctomer), MT-ATP6/subunit a, MT-ATP8/subunit 8, ATP5ME/subunit e, ATP5MF/subunit f, ATP5MG/subunit g, ATP5MK/subunit k, ATP5MJ/subunit j, ATP5F1C/subunit gamma, ATP5F1D/subunit delta, ATP5F1E/subunit epsilon, ATP5PF/subunit F6, ATP5PB/subunit b, ATP5PD/subunit d, ATP5PO/subunit OSCP. ATP synthase complex consists of a soluble F(1) head domain (subunits alpha(3) and beta(3)) - the catalytic core - and a membrane F(0) domain - the membrane proton channel (subunits c, a, 8, e, f, g, k and j). These two domains are linked by a central stalk (subunits gamma, delta, and epsilon) rotating inside the F1 region and a stationary peripheral stalk (subunits F6, b, d, and OSCP). Interacts with DNAJC30; interaction is direct.

Its subcellular location is the mitochondrion inner membrane. The catalysed reaction is H(+)(in) = H(+)(out). Subunit a, of the mitochondrial membrane ATP synthase complex (F(1)F(0) ATP synthase or Complex V) that produces ATP from ADP in the presence of a proton gradient across the membrane which is generated by electron transport complexes of the respiratory chain. ATP synthase complex consist of a soluble F(1) head domain - the catalytic core - and a membrane F(1) domain - the membrane proton channel. These two domains are linked by a central stalk rotating inside the F(1) region and a stationary peripheral stalk. During catalysis, ATP synthesis in the catalytic domain of F(1) is coupled via a rotary mechanism of the central stalk subunits to proton translocation. With the subunit c (ATP5MC1), forms the proton-conducting channel in the F(0) domain, that contains two crucial half-channels (inlet and outlet) that facilitate proton movement from the mitochondrial intermembrane space (IMS) into the matrix. Protons are taken up via the inlet half-channel and released through the outlet half-channel, following a Grotthuss mechanism. This Gallus gallus (Chicken) protein is ATP synthase F(0) complex subunit a.